The following is a 266-amino-acid chain: Ras-like protein family member 12 (266 aa).

Residues 27-34 (GRRGAGKS), 74-78 (DTADL), and 134-137 (NKLD) each bind GTP.

This sequence belongs to the small GTPase superfamily. Ras family.

It catalyses the reaction GTP + H2O = GDP + phosphate + H(+). The polypeptide is Ras-like protein family member 12 (RASL12) (Homo sapiens (Human)).